Here is a 361-residue protein sequence, read N- to C-terminus: Probable dual-specificity RNA methyltransferase RlmN (361 aa).

The active-site Proton acceptor is the E102. Residues 108–344 (SGDRLTVCVS…VRWSKGLGAD (237 aa)) form the Radical SAM core domain. C115 and C347 are joined by a disulfide. Residues C122, C126, and C129 each contribute to the [4Fe-4S] cluster site. S-adenosyl-L-methionine contacts are provided by residues 169-170 (GE), S199, 228-230 (SLH), and N304. The S-methylcysteine intermediate role is filled by C347.

This sequence belongs to the radical SAM superfamily. RlmN family. It depends on [4Fe-4S] cluster as a cofactor.

Its subcellular location is the cytoplasm. It carries out the reaction adenosine(2503) in 23S rRNA + 2 reduced [2Fe-2S]-[ferredoxin] + 2 S-adenosyl-L-methionine = 2-methyladenosine(2503) in 23S rRNA + 5'-deoxyadenosine + L-methionine + 2 oxidized [2Fe-2S]-[ferredoxin] + S-adenosyl-L-homocysteine. The catalysed reaction is adenosine(37) in tRNA + 2 reduced [2Fe-2S]-[ferredoxin] + 2 S-adenosyl-L-methionine = 2-methyladenosine(37) in tRNA + 5'-deoxyadenosine + L-methionine + 2 oxidized [2Fe-2S]-[ferredoxin] + S-adenosyl-L-homocysteine. Specifically methylates position 2 of adenine 2503 in 23S rRNA and position 2 of adenine 37 in tRNAs. In Synechococcus elongatus (strain ATCC 33912 / PCC 7942 / FACHB-805) (Anacystis nidulans R2), this protein is Probable dual-specificity RNA methyltransferase RlmN.